Reading from the N-terminus, the 206-residue chain is GTP-binding protein YPTC5 (206 aa).

15–22 (GDSGVGKT) contributes to the GTP binding site. The Effector region signature appears at 37–45 (YKATIGADF). GTP contacts are provided by residues 63 to 67 (DTAGQ) and 125 to 128 (NKID). 2 S-geranylgeranyl cysteine lipidation sites follow: Cys205 and Cys206.

Belongs to the small GTPase superfamily. Rab family.

The protein localises to the cell membrane. In terms of biological role, protein transport. Probably involved in vesicular traffic. This is GTP-binding protein YPTC5 (YPTC5) from Chlamydomonas reinhardtii (Chlamydomonas smithii).